The sequence spans 133 residues: Small ribosomal subunit protein uS9 (133 aa).

This sequence belongs to the universal ribosomal protein uS9 family.

The polypeptide is Small ribosomal subunit protein uS9 (Ureaplasma urealyticum serovar 10 (strain ATCC 33699 / Western)).